The sequence spans 419 residues: Capsule polysaccharide modification protein LipB (419 aa).

It is found in the cell inner membrane. In terms of biological role, involved in the phospholipid modification of the capsular polysaccharide, a strong requirement for its translocation to the cell surface. In Neisseria meningitidis serogroup A / serotype 4A (strain DSM 15465 / Z2491), this protein is Capsule polysaccharide modification protein LipB (lipB).